The following is a 369-amino-acid chain: Anthranilate phosphoribosyltransferase (369 aa).

5-phospho-alpha-D-ribose 1-diphosphate-binding positions include Gly85, 88–89 (GD), Thr93, 95–98 (NLST), 113–121 (KHGNRAASS), and Ser125. Gly85 lines the anthranilate pocket. Ser97 is a Mg(2+) binding site. Asn116 serves as a coordination point for anthranilate. Residue Arg171 coordinates anthranilate. Mg(2+) contacts are provided by Asp229 and Glu230.

The protein belongs to the anthranilate phosphoribosyltransferase family. As to quaternary structure, homodimer. The cofactor is Mg(2+).

It carries out the reaction N-(5-phospho-beta-D-ribosyl)anthranilate + diphosphate = 5-phospho-alpha-D-ribose 1-diphosphate + anthranilate. It functions in the pathway amino-acid biosynthesis; L-tryptophan biosynthesis; L-tryptophan from chorismate: step 2/5. Its function is as follows. Catalyzes the transfer of the phosphoribosyl group of 5-phosphorylribose-1-pyrophosphate (PRPP) to anthranilate to yield N-(5'-phosphoribosyl)-anthranilate (PRA). This is Anthranilate phosphoribosyltransferase from Frankia alni (strain DSM 45986 / CECT 9034 / ACN14a).